The primary structure comprises 658 residues: Trimethylamine N-oxide transport system permease protein TmoV (658 aa).

Transmembrane regions (helical) follow at residues 20 to 40 (LGLAMIGLAVMMTLLHYAGLL), 103 to 123 (IGPIPWSAIAAMTAVVGYYLG), 127 to 147 (MALLAGGTFVWTAMIGQWDIA), 153 to 173 (VLVVAAPLAFAIGLVLGISAW), 185 to 205 (VLAVLQTLPFFTYLLPAVIFF), 212 to 232 (GAVATTVYAIPPMILMTTLGL), 273 to 293 (VIMLCLAMVVLTAFIGMPGLG), 300 to 320 (MGSFKIGRSFEIGVTIVLLAV), 349 to 369 (FLLMAIGAFVGFTLIAQVVPI), 420 to 440 (FMLSIPTVAFVLFISAAALLV), 447 to 467 (VLAAAFFGLVALTGWWDRSVI), 469 to 489 (LYSVLAAVSIALLLGVPIGVV), 517 to 537 (IPAIMLFGITATSVVMSILIF), 585 to 605 (AVGFNQAIMFAFFMVIIAAFI), and 627 to 647 (FVLGICVTLMALTFDMVIMKW). An ABC transmembrane type-1 1 domain is found at 147–326 (AMQTMSVLVV…LLAVTLDRMS (180 aa)). An ABC transmembrane type-1 2 domain is found at 465–644 (SVITLYSVLA…LMALTFDMVI (180 aa)).

This sequence belongs to the binding-protein-dependent transport system permease family. The complex is probably composed of two ATP-binding proteins (TmoW), two transmembrane proteins (TmoV) and a solute-binding protein (TmoX).

It localises to the cell inner membrane. Part of the ABC transporter complex TmoXWV involved in trimethylamine N-oxide (TMAO) import. Responsible for the translocation of the substrate across the membrane. Is specific for TMAO and essential for TMAO metabolism. The polypeptide is Trimethylamine N-oxide transport system permease protein TmoV (Ruegeria pomeroyi (strain ATCC 700808 / DSM 15171 / DSS-3) (Silicibacter pomeroyi)).